The primary structure comprises 466 residues: UDP-N-acetylmuramoylalanine--D-glutamate ligase (466 aa).

117 to 123 (GTKGKTT) is a binding site for ATP.

This sequence belongs to the MurCDEF family.

The protein localises to the cytoplasm. It catalyses the reaction UDP-N-acetyl-alpha-D-muramoyl-L-alanine + D-glutamate + ATP = UDP-N-acetyl-alpha-D-muramoyl-L-alanyl-D-glutamate + ADP + phosphate + H(+). The protein operates within cell wall biogenesis; peptidoglycan biosynthesis. Functionally, cell wall formation. Catalyzes the addition of glutamate to the nucleotide precursor UDP-N-acetylmuramoyl-L-alanine (UMA). The sequence is that of UDP-N-acetylmuramoylalanine--D-glutamate ligase from Roseiflexus sp. (strain RS-1).